The sequence spans 311 residues: Methionyl-tRNA formyltransferase (311 aa).

109-112 (SLLP) provides a ligand contact to (6S)-5,6,7,8-tetrahydrofolate.

It belongs to the Fmt family.

The enzyme catalyses L-methionyl-tRNA(fMet) + (6R)-10-formyltetrahydrofolate = N-formyl-L-methionyl-tRNA(fMet) + (6S)-5,6,7,8-tetrahydrofolate + H(+). Functionally, attaches a formyl group to the free amino group of methionyl-tRNA(fMet). The formyl group appears to play a dual role in the initiator identity of N-formylmethionyl-tRNA by promoting its recognition by IF2 and preventing the misappropriation of this tRNA by the elongation apparatus. The protein is Methionyl-tRNA formyltransferase of Staphylococcus aureus (strain USA300).